The primary structure comprises 479 residues: Preferentially expressed antigen in melanoma-like protein 7 (479 aa).

The stretch at 96 to 124 (MGRLKKVDFRDAQHHASLDMQDEREGRDY) is one LRR 1; degenerate repeat. The LRR 2; degenerate repeat unit spans residues 179-203 (HLCCEKLEIGAVEVSKVRNVLKFLQ). The stretch at 204-230 (PELIKELKLNTVGNLSKLAKFVPFIRK) is one LRR 3; degenerate repeat. The LRR 4; degenerate repeat unit spans residues 231–265 (MRNLQKLMLVRTFGTRTFTQEEKQNISKIISLFCK). LRR repeat units follow at residues 266 to 291 (LSCL…LRCL), 292 to 323 (EAPL…SQLK), 324 to 347 (HLCL…LKRV), 348 to 375 (AANL…ALIK), and 376 to 400 (CTQL…FLHR).

This sequence belongs to the PRAME family. Interacts with UHRF1. As to expression, seems to be specific to pluripotent tissues in the early embryo. Not detected in somatic tissues.

Functionally, promotes maintenance and self-renewal of pluripotent embryonic stem cells (ESCs), downstream of LIF/STAT3. Maintains the pluripotency state of ESCs by repressing DNA methylation through the regulation of UHRF1 stability. Mediates the proteasomal degradation of UHRF1. Is required for the establishment of the blastocyst. In Mus musculus (Mouse), this protein is Preferentially expressed antigen in melanoma-like protein 7.